The following is a 365-amino-acid chain: Flagellar P-ring protein (365 aa).

An N-terminal signal peptide occupies residues 1 to 19 (MIKFLSTFMLLLVTTVVQA).

It belongs to the FlgI family. The basal body constitutes a major portion of the flagellar organelle and consists of four rings (L,P,S, and M) mounted on a central rod.

The protein resides in the periplasm. It is found in the bacterial flagellum basal body. Assembles around the rod to form the L-ring and probably protects the motor/basal body from shearing forces during rotation. The protein is Flagellar P-ring protein of Escherichia fergusonii (strain ATCC 35469 / DSM 13698 / CCUG 18766 / IAM 14443 / JCM 21226 / LMG 7866 / NBRC 102419 / NCTC 12128 / CDC 0568-73).